Consider the following 309-residue polypeptide: F-box/LRR-repeat protein At3g48880 (309 aa).

The 48-residue stretch at L10 to V57 folds into the F-box domain. LRR repeat units follow at residues V77–F107, N108–A133, S159–G184, and C208–H233.

The sequence is that of F-box/LRR-repeat protein At3g48880 from Arabidopsis thaliana (Mouse-ear cress).